The sequence spans 259 residues: Flap endonuclease Xni (259 aa).

Position 109 (Asp109) interacts with Mg(2+). Residues 165–255 (VTPAQLTDYW…FNLQDIRFNS (91 aa)) form the 5'-3' exonuclease domain. K(+) contacts are provided by Leu176, Pro185, Val187, and Ile190. Positions 189 to 194 (GIGPKA) are interaction with DNA.

Belongs to the Xni family. Mg(2+) is required as a cofactor. K(+) serves as cofactor.

Has flap endonuclease activity. During DNA replication, flap endonucleases cleave the 5'-overhanging flap structure that is generated by displacement synthesis when DNA polymerase encounters the 5'-end of a downstream Okazaki fragment. The sequence is that of Flap endonuclease Xni from Vibrio cholerae serotype O1 (strain ATCC 39315 / El Tor Inaba N16961).